Consider the following 245-residue polypeptide: tRNA1(Val) (adenine(37)-N6)-methyltransferase (245 aa).

It belongs to the methyltransferase superfamily. tRNA (adenine-N(6)-)-methyltransferase family.

The protein localises to the cytoplasm. The enzyme catalyses adenosine(37) in tRNA1(Val) + S-adenosyl-L-methionine = N(6)-methyladenosine(37) in tRNA1(Val) + S-adenosyl-L-homocysteine + H(+). Specifically methylates the adenine in position 37 of tRNA(1)(Val) (anticodon cmo5UAC). The sequence is that of tRNA1(Val) (adenine(37)-N6)-methyltransferase from Shigella sonnei (strain Ss046).